The primary structure comprises 222 residues: Lipid A 4'-phosphatase (222 aa).

Residues 1–3 (MAR) lie on the Cytoplasmic side of the membrane. Residues 4–24 (FHIILGLVVCFFAWIFFLIFP) form a helical membrane-spanning segment. Over 25-58 (NLDIQFAGHFYNSSAHQFIGGYDGFLGFLHWFAR) the chain is Periplasmic. Residues 59–79 (FFPIFFSIIVILFLLGSLFID) form a helical membrane-spanning segment. Residues 80–87 (KFKIKYRK) lie on the Cytoplasmic side of the membrane. The chain crosses the membrane as a helical span at residues 88–108 (AIFFIAVCLWIGPGLVVNYVF). Topologically, residues 109–144 (KDHWGRPRPVMVEQFNGDKIFQPPFVISSQCDKNCS) are periplasmic. Residues 145–165 (FVCGDASMGFWLFAFMPLLAT) traverse the membrane as a helical segment. Over 166–169 (RKKK) the chain is Cytoplasmic. A helical transmembrane segment spans residues 170-190 (LVAFIAAVVAGGGLGLMRMSQ). The Periplasmic portion of the chain corresponds to 191 to 193 (GGH). A helical membrane pass occupies residues 194–214 (FFSDVVFCGIFVYISTWVVYA). The Cytoplasmic segment spans residues 215–222 (LMYRKKEY).

This sequence belongs to the lipid A LpxF 4'-phosphatase family.

The protein resides in the cell inner membrane. The protein operates within bacterial outer membrane biogenesis; LPS lipid A biosynthesis. In terms of biological role, removes the 4'-phosphate moiety from lipid IV(A) (a tetraacylated precursor of lipid A) and from pentaacylated lipid A, but not from hexaacylated lipid A (as is found in E.coli). Does not dephosphorylate phosphatidic acid, phosphatidylglycerophosphate, or the 1-phosphate group of lipid A and lipid A precursors. Its expression in E.coli confers resistance to the cationic antimicrobial peptide (CAMP) polymyxin B. Plays a critical role in the ability of the bacteria to avoid the host's innate immune system, especially the bactericidal action of CAMPs, although whether it is CAMP-sensitivity or increased sensitivity to the immune system is not clear. The sequence is that of Lipid A 4'-phosphatase from Francisella tularensis subsp. novicida (strain U112).